Here is a 508-residue protein sequence, read N- to C-terminus: Photosystem II CP47 reaction center protein (508 aa).

6 consecutive transmembrane segments (helical) span residues 21–36 (SVHI…WAGS), 101–115 (IILA…MWHW), 140–156 (GIHL…FGAF), 203–218 (IAAG…FHLS), 237–252 (VLSS…AFVV), and 457–472 (CFAL…HGAR).

The protein belongs to the PsbB/PsbC family. PsbB subfamily. PSII is composed of 1 copy each of membrane proteins PsbA, PsbB, PsbC, PsbD, PsbE, PsbF, PsbH, PsbI, PsbJ, PsbK, PsbL, PsbM, PsbT, PsbX, PsbY, PsbZ, Psb30/Ycf12, at least 3 peripheral proteins of the oxygen-evolving complex and a large number of cofactors. It forms dimeric complexes. It depends on Binds multiple chlorophylls. PSII binds additional chlorophylls, carotenoids and specific lipids. as a cofactor.

It is found in the plastid. The protein localises to the chloroplast thylakoid membrane. Its function is as follows. One of the components of the core complex of photosystem II (PSII). It binds chlorophyll and helps catalyze the primary light-induced photochemical processes of PSII. PSII is a light-driven water:plastoquinone oxidoreductase, using light energy to abstract electrons from H(2)O, generating O(2) and a proton gradient subsequently used for ATP formation. This Mesostigma viride (Green alga) protein is Photosystem II CP47 reaction center protein.